The chain runs to 649 residues: Serine/threonine kinase-like domain-containing protein STKLD1 (649 aa).

The segment covering 1-13 (MLGPESDGRRPTQ) has biased composition (basic and acidic residues). The disordered stretch occupies residues 1 to 23 (MLGPESDGRRPTQGERGPGYPGE). Positions 28-379 (YQVLYQLNPG…CNQAITSAVL (352 aa)) constitute a Protein kinase domain. ATP is bound by residues 34 to 42 (LNPGALGVN) and Lys-57. Residues 621 to 640 (FSKPGLPPGGSPQPGCTASG) form a disordered region.

It belongs to the protein kinase superfamily. Ser/Thr protein kinase family. STKL subfamily.

The sequence is that of Serine/threonine kinase-like domain-containing protein STKLD1 (STKLD1) from Macaca fascicularis (Crab-eating macaque).